The sequence spans 490 residues: Probable cytosol aminopeptidase (490 aa).

Mn(2+)-binding residues include lysine 256 and aspartate 261. Lysine 268 is a catalytic residue. 3 residues coordinate Mn(2+): aspartate 280, aspartate 340, and glutamate 342. Residue arginine 344 is part of the active site.

It belongs to the peptidase M17 family. Mn(2+) is required as a cofactor.

The protein localises to the cytoplasm. It carries out the reaction Release of an N-terminal amino acid, Xaa-|-Yaa-, in which Xaa is preferably Leu, but may be other amino acids including Pro although not Arg or Lys, and Yaa may be Pro. Amino acid amides and methyl esters are also readily hydrolyzed, but rates on arylamides are exceedingly low.. The catalysed reaction is Release of an N-terminal amino acid, preferentially leucine, but not glutamic or aspartic acids.. In terms of biological role, presumably involved in the processing and regular turnover of intracellular proteins. Catalyzes the removal of unsubstituted N-terminal amino acids from various peptides. This chain is Probable cytosol aminopeptidase, found in Synechococcus sp. (strain CC9902).